A 1044-amino-acid chain; its full sequence is Disease resistance protein PIK6-NP (1044 aa).

Positions 3-184 (LAVGASEATM…PQIVSIKEPV (182 aa)) are structured coiled coil (CC) domain. The NB-ARC domain maps to 187–543 (KTVMENLEKW…IAEGFATEKQ (357 aa)). The interval 258–302 (QVSKQEEAGGSTESSSRDENTREPQGSSSTSSREENTAESGTKRM) is disordered. LRR repeat units follow at residues 635 to 657 (LAQVRSLTVFGNLNHVPFHSFNY), 682 to 705 (MLVLKYLSIRRTEIAKIPSKIEKL), and 706 to 728 (EYLETLDIRETYVEELPKSVGQL). The segment at 737–771 (GNKNTRKGLRLPQEKRNKAMKNPSPQGKTKEPAEK) is disordered. LRR repeat units lie at residues 808-834 (LTGLRKLAIYKLKISEENDTFKELLSS), 840-862 (SCGLQTLAINDENSKFINSLYNM), 866-888 (PRYLVSLELSGKLKWLPEWITSI), 889-911 (TTLNKLTISITVLTTETLEILRN), 935-958 (KGILEDNKLATDGEIVIPAKEFKS), and 980-1004 (MPALEIIEMRFQEFEGLFGIEILEN).

Belongs to the disease resistance NB-LRR family.

In terms of biological role, probable disease resistance protein. Resistance proteins guard the plant against pathogens that contain an appropriate avirulence protein via an indirect interaction with this avirulence protein. That triggers a defense system including the hypersensitive response, which restricts the pathogen growth. At the opposite of cultivar Kusabue, the cultivar Nipponbare doesn't recognize the effector avirulence protein AVR-Pik from M.oryzae. This Oryza sativa subsp. japonica (Rice) protein is Disease resistance protein PIK6-NP.